Reading from the N-terminus, the 447-residue chain is Adenylosuccinate synthetase (447 aa).

GTP is bound by residues Gly-35–Lys-41 and Gly-63–Thr-65. Asp-36 functions as the Proton acceptor in the catalytic mechanism. Residues Asp-36 and Gly-63 each coordinate Mg(2+). Residues Asp-36–Lys-39, Asn-61–His-64, Thr-153, Arg-167, Asn-245, Thr-260, and Arg-324 contribute to the IMP site. Catalysis depends on His-64, which acts as the Proton donor. Val-320–Arg-326 is a binding site for substrate. GTP contacts are provided by residues Arg-326, Lys-352–Asp-354, and Gly-435–Gly-437.

It belongs to the adenylosuccinate synthetase family. Homodimer. Requires Mg(2+) as cofactor.

It localises to the cytoplasm. The enzyme catalyses IMP + L-aspartate + GTP = N(6)-(1,2-dicarboxyethyl)-AMP + GDP + phosphate + 2 H(+). It participates in purine metabolism; AMP biosynthesis via de novo pathway; AMP from IMP: step 1/2. Functionally, plays an important role in the de novo pathway and in the salvage pathway of purine nucleotide biosynthesis. Catalyzes the first committed step in the biosynthesis of AMP from IMP. Plays a role in the regulation of adult life span. The polypeptide is Adenylosuccinate synthetase (Drosophila melanogaster (Fruit fly)).